We begin with the raw amino-acid sequence, 20 residues long: Unknown protein NF015 from 2D-PAGE (20 aa).

The interval 1-20 is disordered; it reads TPQIQKPAPQFSKTALLPDE.

This Naegleria fowleri (Brain eating amoeba) protein is Unknown protein NF015 from 2D-PAGE.